The chain runs to 339 residues: Methylthioribose-1-phosphate isomerase (339 aa).

Residues 52 to 54, Arg-89, and Gln-188 each bind substrate; that span reads RGA. Residue Asp-229 is the Proton donor of the active site. 239 to 240 contributes to the substrate binding site; sequence NK.

The protein belongs to the eIF-2B alpha/beta/delta subunits family. MtnA subfamily.

It carries out the reaction 5-(methylsulfanyl)-alpha-D-ribose 1-phosphate = 5-(methylsulfanyl)-D-ribulose 1-phosphate. The protein operates within amino-acid biosynthesis; L-methionine biosynthesis via salvage pathway; L-methionine from S-methyl-5-thio-alpha-D-ribose 1-phosphate: step 1/6. In terms of biological role, catalyzes the interconversion of methylthioribose-1-phosphate (MTR-1-P) into methylthioribulose-1-phosphate (MTRu-1-P). This chain is Methylthioribose-1-phosphate isomerase, found in Anaeromyxobacter dehalogenans (strain 2CP-C).